The primary structure comprises 1148 residues: MESLLLPVLLLLAILWTQAAALINLKYSVEEEQRAGTVIANVAKDAREAGFALDPRQASAFRVVSNSAPHLVDINPSSGLLVTKQKIDRDLLCRQSPKCIISLEVMSSSMEICVIKVEIKDLNDNAPSFPAAQIELEISEAASPGTRIPLDSAYDPDSGSFGVQTYELTPNELFGLEIKTRGDGSRFAELVVEKSLDRETQSHYSFRITALDGGDPPRLGTVGLSIKVTDSNDNNPVFSESTYAVSVPENSPPNTPVIRLNASDPDEGTNGQVVYSFYGYVNDRTRELFQIDPHSGLVTVTGALDYEEGHVYELDVQAKDLGPNSIPAHCKVTVSVLDTNDNPPVINLLSVNSELVEVSESAPPGYVIALVRVSDRDSGLNGRVQCRLLGNVPFRLQEYESFSTILVDGRLDREQHDQYNLTIQARDGGVPMLQSAKSFTVLITDENDNHPHFSKPYYQVIVQENNTPGAYLLSVSARDPDLGLNGSVSYQIVPSQVRDMPVFTYVSINPNSGDIYALRSFNHEQTKAFEFKVLAKDGGLPSLQSNATVRVIILDVNDNTPVITAPPLINGTAEVYIPRNSGIGYLVTVVKAEDYDEGENGRVTYDMTEGDRGFFEIDQVNGEVRTTRTFGESSKSSYELIVVAHDHGKTSLSASALVLIYLSPALDAQESMGSVNLSLIFIIALGSIAGILFVTMIFVAIKCKRDNKEIRTYNCSNCLTITCLLGCFIKGQNSKCLHCISVSPISEEQDKKTEEKVSLRGKRIAEYSYGHQKKSSKKKKISKNDIRLVPRDVEETDKMNVVSCSSLTSSLNYFDYHQQTLPLGCRRSESTFLNVENQNTRNTSANHIYHHSFNSQGPQQPDLIINGVPLPETENYSFDSNYVNSRAHLIKSSSTFKDLEGNSLKDSGHEESDQTDSEHDVQRSLYCDTAVNDVLNTSVTSMGSQMPDHDQNEGFHCREECRILGHSDRCWMPRNPMPIRSKSPEHVRNIIALSIEATAADVEAYDDCGPTKRTFATFGKDVSDHPAEERPTLKGKRTVDVTICSPKVNSVIREAGNGCEAISPVTSPLHLKSSLPTKPSVSYTIALAPPARDLEQYVNNVNNGPTRPSEAEPRGADSEKVMHEVSPILKEGRNKESPGVKRLKDIVL.

The signal sequence occupies residues 1–21 (MESLLLPVLLLLAILWTQAAA). Cadherin domains follow at residues 22-129 (LINL…APSF), 130-238 (PAAQ…NPVF), 239-346 (SEST…PPVI), 350-453 (SVNS…HPHF), 454-563 (SKPY…TPVI), and 569-672 (INGT…QESM). At 22 to 678 (LINLKYSVEE…QESMGSVNLS (657 aa)) the chain is on the extracellular side. Ca(2+)-binding residues include glutamate 31, glutamate 32, aspartate 88, and aspartate 90. A disulfide bridge links cysteine 93 with cysteine 99. Residues aspartate 121, asparagine 123, aspartate 124, asparagine 125, glutamate 140, aspartate 155, aspartate 157, glutamate 199, aspartate 212, aspartate 230, serine 231, asparagine 232, aspartate 233, asparagine 234, and glutamate 249 each coordinate Ca(2+). A glycan (N-linked (GlcNAc...) asparagine) is linked at asparagine 261. Residues aspartate 264, aspartate 266, asparagine 270, aspartate 305, glutamate 307, aspartate 338, asparagine 340, aspartate 341, asparagine 342, glutamate 360, aspartate 375, aspartate 377, asparagine 381, aspartate 412, and glutamate 414 each contribute to the Ca(2+) site. Asparagine 420 carries an N-linked (GlcNAc...) asparagine glycan. Ca(2+)-binding residues include aspartate 427, aspartate 445, glutamate 446, asparagine 447, aspartate 448, asparagine 449, glutamate 464, aspartate 479, aspartate 481, asparagine 485, asparagine 522, glutamate 524, and aspartate 537. Residue asparagine 485 is glycosylated (N-linked (GlcNAc...) asparagine). Asparagine 546 is a glycosylation site (N-linked (GlcNAc...) asparagine). Residues aspartate 555, valine 556, asparagine 557, aspartate 558, and asparagine 559 each coordinate Ca(2+). Residue asparagine 570 is glycosylated (N-linked (GlcNAc...) asparagine). Residues aspartate 594, aspartate 596, asparagine 600, and aspartate 646 each contribute to the Ca(2+) site. A glycan (N-linked (GlcNAc...) asparagine) is linked at asparagine 676. The chain crosses the membrane as a helical span at residues 679-699 (LIFIIALGSIAGILFVTMIFV). Residues 700-1148 (AIKCKRDNKE…GVKRLKDIVL (449 aa)) are Cytoplasmic-facing. Disordered stretches follow at residues 901–921 (GNSL…EHDV) and 1100–1148 (NVNN…DIVL). 3 stretches are compositionally biased toward basic and acidic residues: residues 906-921 (DSGH…EHDV), 1109-1123 (SEAE…KVMH), and 1130-1148 (KEGR…DIVL).

As to quaternary structure, homodimer; antiparallel. In terms of tissue distribution, moderately expressed in all regions of the brain examined, with lowest levels found in the cerebellum. Moderate expression is also found in ovary, and low expression in all other tissues tested. Also detected in primary skin fibroblast.

It localises to the cell membrane. Calcium-dependent cell-adhesion protein. This chain is Protocadherin-19 (PCDH19), found in Homo sapiens (Human).